Consider the following 408-residue polypeptide: Acetate kinase (408 aa).

A Mg(2+)-binding site is contributed by Asn7. Lys14 is a binding site for ATP. Arg91 provides a ligand contact to substrate. Catalysis depends on Asp148, which acts as the Proton donor/acceptor. ATP is bound by residues His208 to Gly212, Asp283 to Arg285, and Gly331 to Asn335. Glu384 contributes to the Mg(2+) binding site.

The protein belongs to the acetokinase family. As to quaternary structure, homodimer. The cofactor is Mg(2+). Requires Mn(2+) as cofactor.

The protein localises to the cytoplasm. The enzyme catalyses acetate + ATP = acetyl phosphate + ADP. The protein operates within metabolic intermediate biosynthesis; acetyl-CoA biosynthesis; acetyl-CoA from acetate: step 1/2. Catalyzes the formation of acetyl phosphate from acetate and ATP. Can also catalyze the reverse reaction. In Methanosarcina mazei (Methanosarcina frisia), this protein is Acetate kinase.